The chain runs to 297 residues: MKGILGQKIGMTQIYTAQGNKVPVTVIEVKPNVVTHKFENTKDGYVALQLGAFDQKERKFKKPEIGHFKKSNTTPKRFVKEIRNMDGYNLGDLVKADIFKSGELVDVTGISKGKGFAGTIKRHNQKIGPKSHGGGGGSKPVRQTGSIGDIAGNKVLKGMTMPGHLGNVQRTIQNLEVVKVDIKNNILLVKGSVPGPKNCFLIIKSAIKNLPSREAIELVNIKEAILKNQLLESAKKYGAEVSVDMKIHEMEEIIHAAMKEKEKLEQEAKQNAEKSNSDDDVRKEAEKLNKNKEDKGE.

Disordered stretches follow at residues Asn-124–Gln-143 and Met-258–Glu-297.

The protein belongs to the universal ribosomal protein uL3 family. In terms of assembly, part of the 50S ribosomal subunit. Forms a cluster with proteins L14 and L19.

Its function is as follows. One of the primary rRNA binding proteins, it binds directly near the 3'-end of the 23S rRNA, where it nucleates assembly of the 50S subunit. The chain is Large ribosomal subunit protein uL3 from Mycoplasma mobile (strain ATCC 43663 / 163K / NCTC 11711) (Mesomycoplasma mobile).